The chain runs to 609 residues: Protein NRT1/ PTR FAMILY 7.1 (609 aa).

The next 2 membrane-spanning stretches (helical) occupy residues 67 to 87 and 109 to 129; these read IILL…GVNL and WTGT…SYWG. Position 133 is a phosphothreonine (T133). The next 10 membrane-spanning stretches (helical) occupy residues 136–156, 173–193, 216–236, 243–263, 367–387, 402–422, 438–458, 474–494, 516–536, and 559–579; these read IFQV…WFFL, SSLG…GYGG, FFSY…TILV, LWTE…VAFL, PIWL…SLFV, IPAA…TGIY, MGIG…TEIQ, ILWQ…MYVG, MASM…VMAI, and FYFL…IFAK.

This sequence belongs to the major facilitator superfamily. Proton-dependent oligopeptide transporter (POT/PTR) (TC 2.A.17) family. In terms of tissue distribution, expressed in flowers.

It localises to the membrane. The protein is Protein NRT1/ PTR FAMILY 7.1 (NPF7.1) of Arabidopsis thaliana (Mouse-ear cress).